Consider the following 138-residue polypeptide: Putative nickel-responsive regulator (138 aa).

The Ni(2+) site is built by His76, His87, His89, and Cys95.

The protein belongs to the transcriptional regulatory CopG/NikR family. It depends on Ni(2+) as a cofactor.

Functionally, transcriptional regulator. The sequence is that of Putative nickel-responsive regulator from Pseudomonas putida (strain W619).